The following is a 280-amino-acid chain: UDP-3-O-acyl-N-acetylglucosamine deacetylase (280 aa).

Zn(2+)-binding residues include His-79, His-237, and Asp-241. His-264 acts as the Proton donor in catalysis.

It belongs to the LpxC family. Requires Zn(2+) as cofactor.

The catalysed reaction is a UDP-3-O-[(3R)-3-hydroxyacyl]-N-acetyl-alpha-D-glucosamine + H2O = a UDP-3-O-[(3R)-3-hydroxyacyl]-alpha-D-glucosamine + acetate. The protein operates within glycolipid biosynthesis; lipid IV(A) biosynthesis; lipid IV(A) from (3R)-3-hydroxytetradecanoyl-[acyl-carrier-protein] and UDP-N-acetyl-alpha-D-glucosamine: step 2/6. Functionally, catalyzes the hydrolysis of UDP-3-O-myristoyl-N-acetylglucosamine to form UDP-3-O-myristoylglucosamine and acetate, the committed step in lipid A biosynthesis. The protein is UDP-3-O-acyl-N-acetylglucosamine deacetylase of Chlamydia abortus (strain DSM 27085 / S26/3) (Chlamydophila abortus).